The following is a 135-amino-acid chain: Transcription antitermination protein NusB (135 aa).

Belongs to the NusB family.

Its function is as follows. Involved in transcription antitermination. Required for transcription of ribosomal RNA (rRNA) genes. Binds specifically to the boxA antiterminator sequence of the ribosomal RNA (rrn) operons. The sequence is that of Transcription antitermination protein NusB from Bdellovibrio bacteriovorus (strain ATCC 15356 / DSM 50701 / NCIMB 9529 / HD100).